A 203-amino-acid polypeptide reads, in one-letter code: Probable metallo-hydrolase MJ0296 (203 aa).

Zn(2+)-binding residues include H86, H88, D90, H91, H135, D152, and H193.

Belongs to the metallo-beta-lactamase superfamily. Zn(2+) serves as cofactor.

This is Probable metallo-hydrolase MJ0296 from Methanocaldococcus jannaschii (strain ATCC 43067 / DSM 2661 / JAL-1 / JCM 10045 / NBRC 100440) (Methanococcus jannaschii).